Here is a 1190-residue protein sequence, read N- to C-terminus: Tight junction protein 2 (1190 aa).

Residue Ser-16 is modified to Phosphoserine. Positions Thr-33 to Arg-120 constitute a PDZ 1 domain. Residues Ser-130, Ser-150, Ser-153, Ser-163, Ser-168, Ser-170, Ser-174, Ser-200, Ser-220, Ser-232, Ser-244, Ser-266, Ser-325, Ser-398, Ser-400, Ser-406, Ser-415, Ser-424, Ser-430, and Ser-431 each carry the phosphoserine modification. The segment at Arg-152–Ile-306 is disordered. Basic and acidic residues predominate over residues Arg-169 to His-291. The PDZ 2 domain maps to Gly-307 to Ser-385. The tract at residues Ile-408–Tyr-506 is disordered. The span at Ser-415–Pro-446 shows a compositional bias: basic and acidic residues. Thr-455 carries the post-translational modification Phosphothreonine. Phosphoserine is present on Ser-499. Residues Asn-509–Ser-590 form the PDZ 3 domain. At Tyr-574 the chain carries Phosphotyrosine. The region spanning Gly-604–Ala-669 is the SH3 domain. A Guanylate kinase-like domain is found at Asn-678 to Gln-876. Phosphoserine occurs at positions 702 and 902. Thr-905 bears the Phosphothreonine mark. 2 positions are modified to phosphoserine: Ser-913 and Ser-920. 2 disordered regions span residues Ser-920–Leu-1079 and Asn-1105–Leu-1190. A phosphothreonine mark is found at Thr-925 and Thr-933. Positions Val-956–Pro-967 are enriched in basic and acidic residues. Residues Ser-966, Ser-978, Ser-986, Ser-1006, Ser-1067, and Ser-1068 each carry the phosphoserine modification. Over residues Glu-994 to Glu-1014 the composition is skewed to basic and acidic residues. Positions Glu-1060 to Asp-1072 are enriched in acidic residues. A Phosphotyrosine modification is found at Tyr-1118. A Phosphothreonine modification is found at Thr-1131. 2 positions are modified to phosphoserine: Ser-1147 and Ser-1159. Residues Tyr-1166 to Lys-1175 show a composition bias toward basic and acidic residues. Positions Thr-1188 to Leu-1190 are interaction with SCRIB.

It belongs to the MAGUK family. In terms of assembly, homodimer. Interacts (via PDZ2 domain) with TJP1/ZO1 (via PDZ2 domain). Interacts with OCLN. Interacts with UBN1. Interacts with SAFB in the nucleus. Interacts with SCRIB. Interacts with USP53 (via the C-terminal region). Interacts with claudins, including CLDN1, CLDN2, CLDN3, CLDN5 and CLDN7. Interacts with CLDN18. Interacts (via N-terminus) with CTNNA1. This protein is found in epithelial cell junctions. Isoform A1 is abundant in the heart and brain. Detected in brain and skeletal muscle. It is present almost exclusively in normal tissues. Isoform C1 is expressed at high level in the kidney, pancreas, heart and placenta. Not detected in brain and skeletal muscle. Found in normal as well as in most neoplastic tissues.

It localises to the cell junction. The protein resides in the adherens junction. The protein localises to the cell membrane. It is found in the tight junction. Its subcellular location is the nucleus. In terms of biological role, plays a role in tight junctions and adherens junctions. Acts as a positive regulator of RANKL-induced osteoclast differentiation, potentially via mediating downstream transcriptional activity. The protein is Tight junction protein 2 of Homo sapiens (Human).